Consider the following 192-residue polypeptide: Protein GrpE (192 aa).

A disordered region spans residues 1–43 (MSKEEFPHEKDLKDEVTPDKAPKKDPKAASKEEVKEDPAKDYE).

The protein belongs to the GrpE family. Homodimer.

The protein resides in the cytoplasm. Participates actively in the response to hyperosmotic and heat shock by preventing the aggregation of stress-denatured proteins, in association with DnaK and GrpE. It is the nucleotide exchange factor for DnaK and may function as a thermosensor. Unfolded proteins bind initially to DnaJ; upon interaction with the DnaJ-bound protein, DnaK hydrolyzes its bound ATP, resulting in the formation of a stable complex. GrpE releases ADP from DnaK; ATP binding to DnaK triggers the release of the substrate protein, thus completing the reaction cycle. Several rounds of ATP-dependent interactions between DnaJ, DnaK and GrpE are required for fully efficient folding. This chain is Protein GrpE, found in Lactobacillus gasseri (strain ATCC 33323 / DSM 20243 / BCRC 14619 / CIP 102991 / JCM 1131 / KCTC 3163 / NCIMB 11718 / NCTC 13722 / AM63).